The following is a 508-amino-acid chain: Inosine-5'-monophosphate dehydrogenase (508 aa).

CBS domains are found at residues 111 to 170 (FITD…EITL) and 174 to 230 (MTTN…PDAS). Residues Asp-267 and 317 to 319 (GMG) contribute to the NAD(+) site. Gly-319 and Gly-321 together coordinate K(+). Ser-322 is a binding site for IMP. Cys-324 provides a ligand contact to K(+). Residue Cys-324 is the Thioimidate intermediate of the active site. IMP-binding positions include 357–359 (DGG), 380–381 (GF), and 404–408 (YRGMA). Catalysis depends on Arg-420, which acts as the Proton acceptor. IMP is bound at residue Gln-432. Gly-492 serves as a coordination point for K(+).

It belongs to the IMPDH/GMPR family. As to quaternary structure, homotetramer. K(+) is required as a cofactor.

The catalysed reaction is IMP + NAD(+) + H2O = XMP + NADH + H(+). It functions in the pathway purine metabolism; XMP biosynthesis via de novo pathway; XMP from IMP: step 1/1. Mycophenolic acid (MPA) is a non-competitive inhibitor that prevents formation of the closed enzyme conformation by binding to the same site as the amobile flap. In contrast, mizoribine monophosphate (MZP) is a competitive inhibitor that induces the closed conformation. MPA is a potent inhibitor of mammalian IMPDHs but a poor inhibitor of the bacterial enzymes. MZP is a more potent inhibitor of bacterial IMPDH. In terms of biological role, catalyzes the conversion of inosine 5'-phosphate (IMP) to xanthosine 5'-phosphate (XMP), the first committed and rate-limiting step in the de novo synthesis of guanine nucleotides, and therefore plays an important role in the regulation of cell growth. This chain is Inosine-5'-monophosphate dehydrogenase, found in Leptospira interrogans serogroup Icterohaemorrhagiae serovar Lai (strain 56601).